Reading from the N-terminus, the 308-residue chain is Porphobilinogen deaminase (308 aa).

Cysteine 243 is modified (S-(dipyrrolylmethanemethyl)cysteine).

The protein belongs to the HMBS family. Monomer. Dipyrromethane is required as a cofactor.

It catalyses the reaction 4 porphobilinogen + H2O = hydroxymethylbilane + 4 NH4(+). Its pathway is porphyrin-containing compound metabolism; protoporphyrin-IX biosynthesis; coproporphyrinogen-III from 5-aminolevulinate: step 2/4. In terms of biological role, tetrapolymerization of the monopyrrole PBG into the hydroxymethylbilane pre-uroporphyrinogen in several discrete steps. This Nitrosomonas europaea (strain ATCC 19718 / CIP 103999 / KCTC 2705 / NBRC 14298) protein is Porphobilinogen deaminase.